Reading from the N-terminus, the 72-residue chain is Translation initiation factor IF-1 (72 aa).

An S1-like domain is found at 1-72 (MAKDDVIEVE…TRGRITYRFK (72 aa)).

This sequence belongs to the IF-1 family. Component of the 30S ribosomal translation pre-initiation complex which assembles on the 30S ribosome in the order IF-2 and IF-3, IF-1 and N-formylmethionyl-tRNA(fMet); mRNA recruitment can occur at any time during PIC assembly.

It is found in the cytoplasm. Its function is as follows. One of the essential components for the initiation of protein synthesis. Stabilizes the binding of IF-2 and IF-3 on the 30S subunit to which N-formylmethionyl-tRNA(fMet) subsequently binds. Helps modulate mRNA selection, yielding the 30S pre-initiation complex (PIC). Upon addition of the 50S ribosomal subunit IF-1, IF-2 and IF-3 are released leaving the mature 70S translation initiation complex. The chain is Translation initiation factor IF-1 from Streptococcus gordonii (strain Challis / ATCC 35105 / BCRC 15272 / CH1 / DL1 / V288).